The chain runs to 299 residues: Oxygen-dependent coproporphyrinogen-III oxidase (299 aa).

Serine 92 is a binding site for substrate. Mn(2+) is bound by residues histidine 96 and histidine 106. Histidine 106 functions as the Proton donor in the catalytic mechanism. 108–110 (NVR) contacts substrate. 2 residues coordinate Mn(2+): histidine 145 and histidine 175. Residues 240–275 (YVEFNLVWDRGTLFGLQTGGRTESILMSMPPLVRWE) form an important for dimerization region. 258-260 (GGR) is a binding site for substrate.

It belongs to the aerobic coproporphyrinogen-III oxidase family. Homodimer. It depends on Mn(2+) as a cofactor.

The protein resides in the cytoplasm. It carries out the reaction coproporphyrinogen III + O2 + 2 H(+) = protoporphyrinogen IX + 2 CO2 + 2 H2O. Its pathway is porphyrin-containing compound metabolism; protoporphyrin-IX biosynthesis; protoporphyrinogen-IX from coproporphyrinogen-III (O2 route): step 1/1. Its function is as follows. Involved in the heme biosynthesis. Catalyzes the aerobic oxidative decarboxylation of propionate groups of rings A and B of coproporphyrinogen-III to yield the vinyl groups in protoporphyrinogen-IX. In Escherichia coli (strain K12 / MC4100 / BW2952), this protein is Oxygen-dependent coproporphyrinogen-III oxidase.